Consider the following 745-residue polypeptide: Ribosomal protein S6 kinase alpha-6 (745 aa).

Residues Met-1–Val-28 form a disordered region. Residues Phe-73 to Phe-330 form the Protein kinase 1 domain. Residues Leu-79 to Val-87 and Lys-105 contribute to the ATP site. Asp-198 serves as the catalytic Proton acceptor. Phosphoserine is present on residues Ser-232, Ser-372, and Ser-389. Residues Ala-331 to Lys-400 enclose the AGC-kinase C-terminal domain. Residues Tyr-426–Ile-683 enclose the Protein kinase 2 domain. ATP contacts are provided by residues Ile-432–Cys-440 and Lys-455. Asp-543 (proton acceptor) is an active-site residue. Thr-581 carries the post-translational modification Phosphothreonine.

The protein belongs to the protein kinase superfamily. AGC Ser/Thr protein kinase family. S6 kinase subfamily. Forms a complex with MAPK3/ERK1 but not with MAPK9 or MAPK14 in serum-starved cells. It depends on Mg(2+) as a cofactor. Post-translationally, phosphorylated at Ser-232, Ser-372, and Ser-389 in serum-starved cells.

Its subcellular location is the cytoplasm. The protein resides in the cytosol. It is found in the nucleus. The catalysed reaction is L-seryl-[protein] + ATP = O-phospho-L-seryl-[protein] + ADP + H(+). The enzyme catalyses L-threonyl-[protein] + ATP = O-phospho-L-threonyl-[protein] + ADP + H(+). With respect to regulation, constitutively activated by phosphorylation at Ser-232, Ser-372, and Ser-389 in serum-starved cells. Does not require growth factor stimulation for significant kinase activity. In terms of biological role, constitutively active serine/threonine-protein kinase that exhibits growth-factor-independent kinase activity and that may participate in p53/TP53-dependent cell growth arrest signaling and play an inhibitory role during embryogenesis. The chain is Ribosomal protein S6 kinase alpha-6 (RPS6KA6) from Homo sapiens (Human).